The chain runs to 98 residues: Putative zinc finger protein ORF98b (98 aa).

The segment at 54-77 (GFCPYCHNHYRTFGILANHIMRSH) adopts a C2H2-type zinc-finger fold.

In Acidianus convivator (ATV), this protein is Putative zinc finger protein ORF98b.